Consider the following 629-residue polypeptide: tRNA uridine 5-carboxymethylaminomethyl modification enzyme MnmG (629 aa).

FAD is bound by residues 13–18 (GGGHAG), V125, and S180. Position 273 to 287 (273 to 287 (GPRYCPSIEDKVMRF)) interacts with NAD(+). Q370 lines the FAD pocket.

Belongs to the MnmG family. In terms of assembly, homodimer. Heterotetramer of two MnmE and two MnmG subunits. FAD serves as cofactor.

It localises to the cytoplasm. NAD-binding protein involved in the addition of a carboxymethylaminomethyl (cmnm) group at the wobble position (U34) of certain tRNAs, forming tRNA-cmnm(5)s(2)U34. The chain is tRNA uridine 5-carboxymethylaminomethyl modification enzyme MnmG from Salmonella schwarzengrund (strain CVM19633).